The primary structure comprises 400 residues: MGKAKFERNKPHVNVGTIGHVDHGKTTTTAALTKISADKGYGTKYIAYDEVAKASESQGRRDSTKILTIATSHVEYETENRHYAHVDCPGHADYVKNMITGAAQMDGAILVVSAVDGPMPQTREHILLARQVNVPSVVVFLNKCDLVEDEELLDLVELEVRELLSKYNYPGDDAPVIRGSAINAINGDPKWVAEFMKLYEALDSYIPEPVREVDKPFLLPVEDVFSITGRGTVATGRIERGIVKVGEEVQLVGYNAEKKTIVTGVEMFRKLLDEGQAGDNVGLLLRGVDKKDIERGMVLAKPNSIKPHTKFHSEVYVLTKEEGGRHTPFFKGYRPQFYFRTTDVTGTIELPEGMEMVMPGDNVQMTIELIIPIAMEEQLRFAIREGGRTVGAGVVTKILA.

The tr-type G domain maps to K10–V210. Residues G19–T26 are G1. G19–T26 lines the GTP pocket. T26 is a binding site for Mg(2+). The G2 stretch occupies residues I66 to A70. Residues D87–G90 form a G3 region. Residues D87–H91 and N142–D145 each bind GTP. Residues N142 to D145 are G4. The interval S180 to I182 is G5.

It belongs to the TRAFAC class translation factor GTPase superfamily. Classic translation factor GTPase family. EF-Tu/EF-1A subfamily. As to quaternary structure, monomer.

It localises to the cytoplasm. The enzyme catalyses GTP + H2O = GDP + phosphate + H(+). In terms of biological role, GTP hydrolase that promotes the GTP-dependent binding of aminoacyl-tRNA to the A-site of ribosomes during protein biosynthesis. This Gemmatimonas aurantiaca (strain DSM 14586 / JCM 11422 / NBRC 100505 / T-27) protein is Elongation factor Tu.